The primary structure comprises 506 residues: Radiation-sensitive protein 28 (506 aa).

5 WD repeats span residues 55–94 (PLSI…HRND), 193–233 (HHKY…AVQD), 285–325 (RMQS…RLYS), 357–396 (AHLR…LQPE), and 404–451 (LGTQ…LWNK).

The protein localises to the nucleus. Its function is as follows. Involved in transcription-coupled repair nucleotide excision repair (NER) of UV-induced DNA lesions. The chain is Radiation-sensitive protein 28 (RAD28) from Saccharomyces cerevisiae (strain ATCC 204508 / S288c) (Baker's yeast).